The chain runs to 309 residues: General transcription factor IIH subunit 3 (309 aa).

The C4-type zinc finger occupies 269 to 286; it reads CSVCLSIFCNFSPICTTC.

The protein belongs to the TFB4 family. As to quaternary structure, part of a TFIID-containing RNA polymerase II pre-initiation complex that is composed of TBP and at least GTF2A1, GTF2A2, GTF2E1, GTF2E2, GTF2F1, GTF2H2, GTF2H3, GTF2H4, GTF2H5, GTF2B, TCEA1, ERCC2, ERCC3, TAF1, TAF2, TAF3, TAF4, TAF5, TAF6, TAF7, TAF8, TAF9, TAF10, TAF11, TAF12 and TAF13. Component of the 7-subunit TFIIH core complex composed of XPB/ERCC3, XPD/ERCC2, GTF2H1, GTF2H2, GTF2H3, GTF2H4 and GTF2H5, which is active in NER. The core complex associates with the 3-subunit CDK-activating kinase (CAK) module composed of CCNH/cyclin H, CDK7 and MNAT1 to form the 10-subunit holoenzyme (holo-TFIIH) active in transcription. Interacts with RARA; the interaction requires prior phosphorylation of RARA on 'Ser-369' which then enhances interaction of RARA with CDK7.

The protein localises to the nucleus. In terms of biological role, component of the general transcription and DNA repair factor IIH (TFIIH) core complex, which is involved in general and transcription-coupled nucleotide excision repair (NER) of damaged DNA and, when complexed to CAK, in RNA transcription by RNA polymerase II. In NER, TFIIH acts by opening DNA around the lesion to allow the excision of the damaged oligonucleotide and its replacement by a new DNA fragment. In transcription, TFIIH has an essential role in transcription initiation. When the pre-initiation complex (PIC) has been established, TFIIH is required for promoter opening and promoter escape. Phosphorylation of the C-terminal tail (CTD) of the largest subunit of RNA polymerase II by the kinase module CAK controls the initiation of transcription. In Bos taurus (Bovine), this protein is General transcription factor IIH subunit 3 (GTF2H3).